The following is a 527-amino-acid chain: Catalase (527 aa).

Over residues 1-22 the composition is skewed to basic and acidic residues; that stretch reads MADSRDPASDQMKHWKEERAAQ. Residues 1 to 32 are disordered; the sequence is MADSRDPASDQMKHWKEERAAQKPDVLTTAGG. Ala2 carries the N-acetylalanine modification. Ser9 bears the Phosphoserine mark. Lys13 bears the N6-succinyllysine mark. Residues His75 and Asn148 contribute to the active site. His194, Ser201, Arg203, and Asn213 together coordinate NADP(+). The residue at position 221 (Lys221) is an N6-succinyllysine. Lys233 carries the N6-acetyllysine modification. The NADP(+) site is built by Lys237, Trp303, His305, and Lys306. Lys306 is subject to N6-acetyllysine; alternate. Position 306 is an N6-succinyllysine; alternate (Lys306). Tyr358 is a binding site for heme. Ser434 carries the post-translational modification Phosphoserine. Lys480 is modified (N6-acetyllysine; alternate). An N6-succinyllysine; alternate modification is found at Lys480. Lys499 carries the N6-acetyllysine modification. Phosphothreonine is present on Thr511. Ser517 is modified (phosphoserine). N6-succinyllysine is present on Lys522. The short motif at 524–527 is the Microbody targeting signal; atypical element; it reads KANL.

The protein belongs to the catalase family. Homotetramer. Interacts (via microbody targeting signal) with PEX5, monomeric form interacts with PEX5, leading to its translocation into peroxisomes. Heme is required as a cofactor. NADP(+) serves as cofactor.

The protein localises to the peroxisome matrix. The catalysed reaction is 2 H2O2 = O2 + 2 H2O. Catalyzes the degradation of hydrogen peroxide (H(2)O(2)) generated by peroxisomal oxidases to water and oxygen, thereby protecting cells from the toxic effects of hydrogen peroxide. Promotes growth of cells including T-cells, B-cells, myeloid leukemia cells, melanoma cells, mastocytoma cells and normal and transformed fibroblast cells. In Cavia porcellus (Guinea pig), this protein is Catalase (CAT).